Reading from the N-terminus, the 301-residue chain is UDP-N-acetylenolpyruvoylglucosamine reductase 1 (301 aa).

Positions 29–196 (KIGGPADILI…LEAEFQLQIG (168 aa)) constitute an FAD-binding PCMH-type domain. Residue Arg-174 is part of the active site. Ser-225 acts as the Proton donor in catalysis. Glu-295 is an active-site residue.

It belongs to the MurB family. Requires FAD as cofactor.

The protein resides in the cytoplasm. The catalysed reaction is UDP-N-acetyl-alpha-D-muramate + NADP(+) = UDP-N-acetyl-3-O-(1-carboxyvinyl)-alpha-D-glucosamine + NADPH + H(+). The protein operates within cell wall biogenesis; peptidoglycan biosynthesis. Functionally, cell wall formation. The polypeptide is UDP-N-acetylenolpyruvoylglucosamine reductase 1 (Bacillus thuringiensis subsp. konkukian (strain 97-27)).